The sequence spans 112 residues: Putative transposase YkgN (112 aa).

The protein belongs to the transposase 8 family.

This chain is Putative transposase YkgN (ykgN), found in Escherichia coli (strain K12).